The primary structure comprises 273 residues: Peroxiredoxin-4 (273 aa).

The first 40 residues, 1–40, serve as a signal peptide directing secretion; that stretch reads METWSKLLDGTTPSRRWRKLVLLLPPLLLFLLQTEALQGL. In terms of domain architecture, Thioredoxin spans 81 to 239; that stretch reads AKISKPAPYW…TLRLVQAFQY (159 aa). C126 serves as the catalytic Cysteine sulfenic acid (-SOH) intermediate.

This sequence belongs to the peroxiredoxin family. AhpC/Prx1 subfamily. As to quaternary structure, homodimer; disulfide-linked, upon oxidation. 5 homodimers assemble to form a ring-like decamer. In terms of processing, the enzyme can be inactivated by further oxidation of the cysteine sulfenic acid (C(P)-SOH) to sulphinic acid (C(P)-SO2H) and sulphonic acid (C(P)-SO3H) instead of its condensation to a disulfide bond.

Its subcellular location is the cytoplasm. The protein resides in the endoplasmic reticulum. It localises to the secreted. It carries out the reaction a hydroperoxide + [thioredoxin]-dithiol = an alcohol + [thioredoxin]-disulfide + H2O. Functionally, thiol-specific peroxidase that catalyzes the reduction of hydrogen peroxide and organic hydroperoxides to water and alcohols, respectively. Plays a role in cell protection against oxidative stress by detoxifying peroxides and as sensor of hydrogen peroxide-mediated signaling events. Regulates the activation of NF-kappa-B in the cytosol by a modulation of I-kappa-B-alpha phosphorylation. This Rattus norvegicus (Rat) protein is Peroxiredoxin-4 (Prdx4).